The primary structure comprises 1224 residues: DNA-directed RNA polymerase subunit beta (1224 aa).

Belongs to the RNA polymerase beta chain family. As to quaternary structure, the RNAP catalytic core consists of 2 alpha, 1 beta, 1 beta' and 1 omega subunit. When a sigma factor is associated with the core the holoenzyme is formed, which can initiate transcription.

It carries out the reaction RNA(n) + a ribonucleoside 5'-triphosphate = RNA(n+1) + diphosphate. In terms of biological role, DNA-dependent RNA polymerase catalyzes the transcription of DNA into RNA using the four ribonucleoside triphosphates as substrates. This is DNA-directed RNA polymerase subunit beta from Pelotomaculum thermopropionicum (strain DSM 13744 / JCM 10971 / SI).